The following is a 282-amino-acid chain: Tetraspanin-6 (282 aa).

Topologically, residues 1-7 (MYRFSNT) are cytoplasmic. A helical membrane pass occupies residues 8–28 (VIGVLNLLTLLASIPIIGTAL). Residues 29 to 44 (YKARSSTTCENFLQTP) lie on the Extracellular side of the membrane. Residues 45–65 (LLVIGFIILIVSLAGFIGACF) traverse the membrane as a helical segment. Over 66–74 (NVAWALWVY) the chain is Cytoplasmic. The helical transmembrane segment at 75 to 95 (LVVMIFLIATLMGLTLFGLVV) threads the bilayer. The Extracellular portion of the chain corresponds to 96–220 (TSQGGGVEVP…EIRLDWRKLS (125 aa)). A helical transmembrane segment spans residues 221 to 241 (VVNILVLVLLIAVYAAGCCAF). Residues 242-282 (HNTRHAAHPYHPSDDNRMTRVRPRWDYYWWRWWHEKKEQLY) lie on the Cytoplasmic side of the membrane.

Belongs to the tetraspanin (TM4SF) family.

The protein localises to the membrane. In terms of biological role, may be involved in the regulation of cell differentiation. The chain is Tetraspanin-6 (TET6) from Arabidopsis thaliana (Mouse-ear cress).